The primary structure comprises 528 residues: Exodeoxyribonuclease 7 large subunit (528 aa).

The tract at residues 486–528 (QGDRDAVIDGESSGVLPPSAAPAPTRPTPRPKPASSSDQGSLF) is disordered. Residues 504-517 (SAAPAPTRPTPRPK) are compositionally biased toward pro residues.

The protein belongs to the XseA family. As to quaternary structure, heterooligomer composed of large and small subunits.

The protein localises to the cytoplasm. The enzyme catalyses Exonucleolytic cleavage in either 5'- to 3'- or 3'- to 5'-direction to yield nucleoside 5'-phosphates.. Bidirectionally degrades single-stranded DNA into large acid-insoluble oligonucleotides, which are then degraded further into small acid-soluble oligonucleotides. This Caulobacter sp. (strain K31) protein is Exodeoxyribonuclease 7 large subunit.